Consider the following 151-residue polypeptide: UPF0251 protein Ctha_0452 (151 aa).

The protein belongs to the UPF0251 family.

In Chloroherpeton thalassium (strain ATCC 35110 / GB-78), this protein is UPF0251 protein Ctha_0452.